The sequence spans 251 residues: Carbohydrate deacetylase (251 aa).

Mg(2+) is bound by residues histidine 59 and histidine 122.

It belongs to the YdjC deacetylase family. In terms of assembly, homodimer. Requires Mg(2+) as cofactor.

In terms of biological role, probably catalyzes the deacetylation of acetylated carbohydrates an important step in the degradation of oligosaccharides. This is Carbohydrate deacetylase from Vibrio campbellii (strain ATCC BAA-1116).